The following is a 235-amino-acid chain: Carboxy-S-adenosyl-L-methionine synthase (235 aa).

Residues tyrosine 35, 60–62 (GCS), 83–84 (DN), asparagine 124, and arginine 191 contribute to the S-adenosyl-L-methionine site.

It belongs to the class I-like SAM-binding methyltransferase superfamily. Cx-SAM synthase family. As to quaternary structure, homodimer.

It carries out the reaction prephenate + S-adenosyl-L-methionine = carboxy-S-adenosyl-L-methionine + 3-phenylpyruvate + H2O. Functionally, catalyzes the conversion of S-adenosyl-L-methionine (SAM) to carboxy-S-adenosyl-L-methionine (Cx-SAM). The sequence is that of Carboxy-S-adenosyl-L-methionine synthase from Campylobacter jejuni subsp. jejuni serotype O:2 (strain ATCC 700819 / NCTC 11168).